The sequence spans 343 residues: Glyceraldehyde-3-phosphate dehydrogenase (343 aa).

Residues 13–14 (TI) and G111 each bind NAD(+). Residue 140-142 (SCN) coordinates D-glyceraldehyde 3-phosphate. Catalysis depends on C141, which acts as the Nucleophile. NAD(+) is bound at residue R169. 195-196 (HA) is a D-glyceraldehyde 3-phosphate binding site. Q303 lines the NAD(+) pocket.

Belongs to the glyceraldehyde-3-phosphate dehydrogenase family. In terms of assembly, homotetramer.

It is found in the cytoplasm. It catalyses the reaction D-glyceraldehyde 3-phosphate + phosphate + NADP(+) = (2R)-3-phospho-glyceroyl phosphate + NADPH + H(+). The catalysed reaction is D-glyceraldehyde 3-phosphate + phosphate + NAD(+) = (2R)-3-phospho-glyceroyl phosphate + NADH + H(+). It participates in carbohydrate degradation; glycolysis; pyruvate from D-glyceraldehyde 3-phosphate: step 1/5. The sequence is that of Glyceraldehyde-3-phosphate dehydrogenase from Sulfolobus acidocaldarius (strain ATCC 33909 / DSM 639 / JCM 8929 / NBRC 15157 / NCIMB 11770).